The following is a 211-amino-acid chain: Large ribosomal subunit protein uL3 (211 aa).

It belongs to the universal ribosomal protein uL3 family. As to quaternary structure, part of the 50S ribosomal subunit. Forms a cluster with proteins L14 and L19.

One of the primary rRNA binding proteins, it binds directly near the 3'-end of the 23S rRNA, where it nucleates assembly of the 50S subunit. This chain is Large ribosomal subunit protein uL3, found in Halothermothrix orenii (strain H 168 / OCM 544 / DSM 9562).